Here is an 82-residue protein sequence, read N- to C-terminus: MSAPWTLSPEPLPPSTGPPVGAGLDVEQRTVFAFVLCLLVVLVLLMVRCVRILLDPYSRMPASSWTDHKEALERGQFDYALV.

The segment at 1-20 (MSAPWTLSPEPLPPSTGPPV) is disordered. The helical transmembrane segment at 30–50 (TVFAFVLCLLVVLVLLMVRCV) threads the bilayer.

The protein belongs to the cortexin family. As to expression, neuron specific.

It localises to the membrane. May mediate extracellular or intracellular signaling of cortical neurons during forebrain development. The chain is Cortexin-1 (Ctxn1) from Rattus norvegicus (Rat).